The sequence spans 493 residues: Probable malate:quinone oxidoreductase (493 aa).

The protein belongs to the MQO family. FAD is required as a cofactor.

It carries out the reaction (S)-malate + a quinone = a quinol + oxaloacetate. The protein operates within carbohydrate metabolism; tricarboxylic acid cycle; oxaloacetate from (S)-malate (quinone route): step 1/1. In Mycobacterium tuberculosis (strain ATCC 25177 / H37Ra), this protein is Probable malate:quinone oxidoreductase.